The chain runs to 327 residues: Malate dehydrogenase (327 aa).

An NAD(+)-binding site is contributed by 11-17 (GAAGQIS). R92 and R98 together coordinate substrate. Residues N105, Q112, and 129–131 (VGN) contribute to the NAD(+) site. Residues N131 and R162 each coordinate substrate. The Proton acceptor role is filled by H187.

Belongs to the LDH/MDH superfamily. MDH type 2 family.

It catalyses the reaction (S)-malate + NAD(+) = oxaloacetate + NADH + H(+). Catalyzes the reversible oxidation of malate to oxaloacetate. The sequence is that of Malate dehydrogenase from Cellvibrio japonicus (strain Ueda107) (Pseudomonas fluorescens subsp. cellulosa).